The following is a 337-amino-acid chain: MVTIKDIAQAANVSTSTVSRVISGNPRISMQTREKVKATMKSFNYQPNRAARTLATKQSNTIGIIQKSASIEDSQNPFVLDVLSGIFSKCKNHGYATISTTKGQSIEIELEVQEMIHYHSVDGFIVLYSKKSDPIIDILKSHAMPYVIIGKPLTDDDIIHIDNDNVSASQSLTRYLIDKGHNKFLFVAETGNYEVVKDRIAGHLNAIEQTDSVTDIVYFAKNRHYIRSFFQDLIEHRTLPTVVITSDTLLNHLILSVFYELKLHIPTDIQTATFNDSYLNAFASPPQTTVDIYPKLLGEGAAESAINIIQGHNILNFYKLIPTTIIERESTTTIQEV.

One can recognise an HTH lacI-type domain in the interval 1–56 (MVTIKDIAQAANVSTSTVSRVISGNPRISMQTREKVKATMKSFNYQPNRAARTLAT). Positions 4-23 (IKDIAQAANVSTSTVSRVIS) form a DNA-binding region, H-T-H motif.

Its function is as follows. Transcriptional repressor of the malA gene for maltase. The polypeptide is HTH-type transcriptional regulator MalR (malR) (Staphylococcus xylosus).